The primary structure comprises 103 residues: Co-chaperonin GroES (103 aa).

Belongs to the GroES chaperonin family. In terms of assembly, heptamer of 7 subunits arranged in a ring. Interacts with the chaperonin GroEL.

The protein resides in the cytoplasm. In terms of biological role, together with the chaperonin GroEL, plays an essential role in assisting protein folding. The GroEL-GroES system forms a nano-cage that allows encapsulation of the non-native substrate proteins and provides a physical environment optimized to promote and accelerate protein folding. GroES binds to the apical surface of the GroEL ring, thereby capping the opening of the GroEL channel. This chain is Co-chaperonin GroES, found in Synechococcus sp. (strain CC9902).